We begin with the raw amino-acid sequence, 250 residues long: Triosephosphate isomerase (250 aa).

Residue 9–11 participates in substrate binding; the sequence is NWK. Histidine 95 serves as the catalytic Electrophile. Glutamate 167 functions as the Proton acceptor in the catalytic mechanism. Substrate is bound by residues glycine 173, serine 213, and 234–235; that span reads GG.

Belongs to the triosephosphate isomerase family. In terms of assembly, homodimer.

Its subcellular location is the cytoplasm. It carries out the reaction D-glyceraldehyde 3-phosphate = dihydroxyacetone phosphate. The protein operates within carbohydrate biosynthesis; gluconeogenesis. Its pathway is carbohydrate degradation; glycolysis; D-glyceraldehyde 3-phosphate from glycerone phosphate: step 1/1. Involved in the gluconeogenesis. Catalyzes stereospecifically the conversion of dihydroxyacetone phosphate (DHAP) to D-glyceraldehyde-3-phosphate (G3P). The polypeptide is Triosephosphate isomerase (Herpetosiphon aurantiacus (strain ATCC 23779 / DSM 785 / 114-95)).